The following is a 360-amino-acid chain: Phospho-N-acetylmuramoyl-pentapeptide-transferase (360 aa).

10 helical membrane passes run 16-36 (FAVF…ALVL), 73-93 (TMGG…WADL), 97-117 (YVWV…VDDY), 134-154 (YFWQ…TAST), 168-188 (YSIP…VGSS), 199-219 (GLAI…CYLS), 236-256 (AGEL…FLWF), 263-283 (VFMG…IAVI), 288-308 (IVLF…VIQV), and 338-358 (VIVR…ATLK).

This sequence belongs to the glycosyltransferase 4 family. MraY subfamily. Mg(2+) is required as a cofactor.

It localises to the cell inner membrane. It catalyses the reaction UDP-N-acetyl-alpha-D-muramoyl-L-alanyl-gamma-D-glutamyl-meso-2,6-diaminopimeloyl-D-alanyl-D-alanine + di-trans,octa-cis-undecaprenyl phosphate = di-trans,octa-cis-undecaprenyl diphospho-N-acetyl-alpha-D-muramoyl-L-alanyl-D-glutamyl-meso-2,6-diaminopimeloyl-D-alanyl-D-alanine + UMP. It functions in the pathway cell wall biogenesis; peptidoglycan biosynthesis. In terms of biological role, catalyzes the initial step of the lipid cycle reactions in the biosynthesis of the cell wall peptidoglycan: transfers peptidoglycan precursor phospho-MurNAc-pentapeptide from UDP-MurNAc-pentapeptide onto the lipid carrier undecaprenyl phosphate, yielding undecaprenyl-pyrophosphoryl-MurNAc-pentapeptide, known as lipid I. The protein is Phospho-N-acetylmuramoyl-pentapeptide-transferase of Pseudomonas fluorescens (strain Pf0-1).